A 361-amino-acid polypeptide reads, in one-letter code: tRNA/tmRNA (uracil-C(5))-methyltransferase (361 aa).

S-adenosyl-L-methionine-binding residues include Q185, Y213, N218, E234, and D294. The active-site Nucleophile is the C319. The active-site Proton acceptor is E353.

This sequence belongs to the class I-like SAM-binding methyltransferase superfamily. RNA M5U methyltransferase family. TrmA subfamily.

It carries out the reaction uridine(54) in tRNA + S-adenosyl-L-methionine = 5-methyluridine(54) in tRNA + S-adenosyl-L-homocysteine + H(+). It catalyses the reaction uridine(341) in tmRNA + S-adenosyl-L-methionine = 5-methyluridine(341) in tmRNA + S-adenosyl-L-homocysteine + H(+). In terms of biological role, dual-specificity methyltransferase that catalyzes the formation of 5-methyluridine at position 54 (m5U54) in all tRNAs, and that of position 341 (m5U341) in tmRNA (transfer-mRNA). The chain is tRNA/tmRNA (uracil-C(5))-methyltransferase from Pseudomonas putida (strain GB-1).